Reading from the N-terminus, the 247-residue chain is Molybdate/tungstate transport system permease protein WtpB (247 aa).

At 1–8 the chain is on the cytoplasmic side; it reads MRRDYTLY. Residues 9–29 traverse the membrane as a helical segment; sequence LFAALGTFLIAYIAVPIAVIF. Residues 30 to 55 are Extracellular-facing; the sequence is LKQASDVEMLVKTLHDPYVIEAIRNS. The ABC transmembrane type-1 domain occupies 52 to 238; the sequence is IRNSLLTATA…SLSLGIFVIL (187 aa). The helical transmembrane segment at 56-76 threads the bilayer; that stretch reads LLTATATALIALLFGVPLGYV. Topologically, residues 77 to 90 are cytoplasmic; sequence LARKDFPGKSAVQA. Residues 91–111 traverse the membrane as a helical segment; sequence LVDVPIVIPHSVVGIMLLVTF. Residues 112 to 114 are Extracellular-facing; it reads SNS. The chain crosses the membrane as a helical span at residues 115 to 135; it reads ILDSYKGIVAAMLFVSAPFTI. The Cytoplasmic segment spans residues 136–163; sequence NAARDGFLAVDEKLEAVARTLGASRWRA. Residues 164–184 form a helical membrane-spanning segment; sequence FLSISLPMAFPSIASGAIMTW. At 185 to 222 the chain is on the extracellular side; that stretch reads ARAISEVGAILIVAYYPKTAQVLILEYFNNYGLRASRP. Residues 223–243 form a helical membrane-spanning segment; that stretch reads IAVIMVSLSLGIFVILRWLVG. Topologically, residues 244-247 are cytoplasmic; it reads RKNA.

It belongs to the binding-protein-dependent transport system permease family. As to quaternary structure, the complex is composed of two ATP-binding proteins (WtpC), two transmembrane proteins (WtpB) and a solute-binding protein (WtpA).

The protein localises to the cell membrane. Part of the ABC transporter complex WtpABC involved in molybdate/tungstate import. Probably responsible for the translocation of the substrate across the membrane. This chain is Molybdate/tungstate transport system permease protein WtpB (wtpB), found in Thermococcus kodakarensis (strain ATCC BAA-918 / JCM 12380 / KOD1) (Pyrococcus kodakaraensis (strain KOD1)).